We begin with the raw amino-acid sequence, 142 residues long: Nucleoside diphosphate kinase (142 aa).

Residues lysine 11, phenylalanine 59, arginine 87, threonine 93, arginine 107, and asparagine 117 each coordinate ATP. The Pros-phosphohistidine intermediate role is filled by histidine 120.

Belongs to the NDK family. Homotetramer. Mg(2+) serves as cofactor.

The protein resides in the cytoplasm. The catalysed reaction is a 2'-deoxyribonucleoside 5'-diphosphate + ATP = a 2'-deoxyribonucleoside 5'-triphosphate + ADP. It catalyses the reaction a ribonucleoside 5'-diphosphate + ATP = a ribonucleoside 5'-triphosphate + ADP. Its function is as follows. Major role in the synthesis of nucleoside triphosphates other than ATP. The ATP gamma phosphate is transferred to the NDP beta phosphate via a ping-pong mechanism, using a phosphorylated active-site intermediate. The chain is Nucleoside diphosphate kinase from Aquifex aeolicus (strain VF5).